A 41-amino-acid chain; its full sequence is trp operon leader peptide (41 aa).

In terms of biological role, this protein is involved in control of the biosynthesis of tryptophan. The protein is trp operon leader peptide (trpL) of Vibrio parahaemolyticus serotype O3:K6 (strain RIMD 2210633).